We begin with the raw amino-acid sequence, 60 residues long: Large ribosomal subunit protein uL30 (60 aa).

The protein belongs to the universal ribosomal protein uL30 family. Part of the 50S ribosomal subunit.

In Leuconostoc mesenteroides subsp. mesenteroides (strain ATCC 8293 / DSM 20343 / BCRC 11652 / CCM 1803 / JCM 6124 / NCDO 523 / NBRC 100496 / NCIMB 8023 / NCTC 12954 / NRRL B-1118 / 37Y), this protein is Large ribosomal subunit protein uL30.